The primary structure comprises 140 residues: ATP synthase epsilon chain (140 aa).

The protein belongs to the ATPase epsilon chain family. F-type ATPases have 2 components, CF(1) - the catalytic core - and CF(0) - the membrane proton channel. CF(1) has five subunits: alpha(3), beta(3), gamma(1), delta(1), epsilon(1). CF(0) has three main subunits: a, b and c.

Its subcellular location is the cell inner membrane. Produces ATP from ADP in the presence of a proton gradient across the membrane. This is ATP synthase epsilon chain from Neisseria gonorrhoeae (strain ATCC 700825 / FA 1090).